The chain runs to 83 residues: MTLFNSISSISNSTGISKHSLIGNFESNNSRSGGNSISWLGGFDGCGGCGGCGGCGGCGCGSSNLNIINVDIDIGRRRRRRCC.

The protein belongs to the UPF0512 family.

The sequence is that of UPF0512 protein G from Dictyostelium discoideum (Social amoeba).